The primary structure comprises 163 residues: Large ribosomal subunit protein uL22c (163 aa).

Belongs to the universal ribosomal protein uL22 family. Part of the 50S ribosomal subunit.

It localises to the plastid. The protein resides in the chloroplast. This protein binds specifically to 23S rRNA. Functionally, the globular domain of the protein is located near the polypeptide exit tunnel on the outside of the subunit, while an extended beta-hairpin is found that lines the wall of the exit tunnel in the center of the 70S ribosome. The polypeptide is Large ribosomal subunit protein uL22c (rpl22) (Lobularia maritima (Sweet alyssum)).